A 426-amino-acid polypeptide reads, in one-letter code: D-tagatose-1,6-bisphosphate aldolase subunit KbaZ (426 aa).

Belongs to the GatZ/KbaZ family. KbaZ subfamily. As to quaternary structure, forms a complex with KbaY.

It functions in the pathway carbohydrate metabolism; D-tagatose 6-phosphate degradation; D-glyceraldehyde 3-phosphate and glycerone phosphate from D-tagatose 6-phosphate: step 2/2. Its function is as follows. Component of the tagatose-1,6-bisphosphate aldolase KbaYZ that is required for full activity and stability of the Y subunit. Could have a chaperone-like function for the proper and stable folding of KbaY. When expressed alone, KbaZ does not show any aldolase activity. This Escherichia coli O127:H6 (strain E2348/69 / EPEC) protein is D-tagatose-1,6-bisphosphate aldolase subunit KbaZ.